We begin with the raw amino-acid sequence, 131 residues long: Histone H2A.2 (131 aa).

Ser2 carries the post-translational modification N-acetylserine. N6-acetyllysine is present on residues Lys5 and Lys8. N5-methylglutamine is present on Gln106. A Phosphoserine modification is found at Ser128. Residues Ser128–Gln129 carry the [ST]-Q motif motif.

It belongs to the histone H2A family. The nucleosome is a histone octamer containing two molecules each of H2A, H2B, H3 and H4 assembled in one H3-H4 heterotetramer and two H2A-H2B heterodimers. The octamer wraps approximately 147 bp of DNA. In terms of processing, phosphorylated to form H2AS128ph (gamma-H2A) in response to DNA double-strand breaks (DSBs) generated by exogenous genotoxic agents and by stalled replication forks. Phosphorylation is dependent on the DNA damage checkpoint kinases MEC1/ATR and TEL1/ATM, spreads on either side of a detected DSB site and may mark the surrounding chromatin for recruitment of proteins required for DNA damage signaling and repair. Gamma-H2A is removed from the DNA prior to the strand invasion-primer extension step of the repair process and subsequently dephosphorylated by PPH3, a component of the histone H2A phosphatase complex (HTP-C). Dephosphorylation is necessary for efficient recovery from the DNA damage checkpoint. Acetylated by ESA1 to form H2AK4ac and H2AK7ac.

It localises to the nucleus. Its subcellular location is the chromosome. Core component of nucleosome which plays a central role in DNA double strand break (DSB) repair. Nucleosomes wrap and compact DNA into chromatin, limiting DNA accessibility to the cellular machineries which require DNA as a template. Histones thereby play a central role in transcription regulation, DNA repair, DNA replication and chromosomal stability. DNA accessibility is regulated via a complex set of post-translational modifications of histones, also called histone code, and nucleosome remodeling. The sequence is that of Histone H2A.2 (HTA2) from Candida glabrata (strain ATCC 2001 / BCRC 20586 / JCM 3761 / NBRC 0622 / NRRL Y-65 / CBS 138) (Yeast).